The chain runs to 278 residues: MAYNYRFAILLVLLSATVGFTAAALKPPVRTLNGNITLNLIWYGKFTPIQRSIIVDFIRSISSVTAAKGPSVASWWKTTEKYKTGVSTLVVGKQLLLENYPLGKSLKSPYLRALSSKLNAGGARSITVVLTAKDVTVEGLCMNRCGTHGSKSSSVNSGAYVWVGNSETQCPGYCAWPFHQPIYGPQSPPLVAPNGDVGVDGMIINIATLLVNTVTNPSPEAVSACTGIFGSGAYPGYAGRVLVDKTSGASYNALGLAGRKYLLPALWDPQTSTCKTMV.

The N-terminal stretch at 1 to 23 is a signal peptide; sequence MAYNYRFAILLVLLSATVGFTAA. A glycan (N-linked (GlcNAc...) asparagine) is linked at asparagine 35.

It belongs to the EXORDIUM family.

Its subcellular location is the secreted. The protein localises to the extracellular space. The protein resides in the apoplast. In terms of biological role, may play a role in a brassinosteroid-dependent regulation of growth and development. The chain is Protein EXORDIUM-like 4 (EXL4) from Arabidopsis thaliana (Mouse-ear cress).